The sequence spans 391 residues: MFFTKVLNNQVANGLKQLPVHKRVQMAYDLHIPNKTVNPNLNIRSHEPIVFVHGIFGSKKNYRHDCQKIANVTHTPVYTIDLRNHGQSMHALPFDYETLAQDVTDFCEDHGLKKVNLIGYSLGAKICMLTMLQNPDLVRSGVIIDNSPIEQPHIEIFLTQFIKSMLHVLNSTKIRADDKDWKSKANQAMRRYIPNGGIRDYLLANLINKVPKGYKSPVINYDDGYIHFQNPVRHMTEVAVKNVSAWPTEHVKGLKFEGQVRFLKGTKSAFIDEKGLEAIKEYFPNYSLSELNATHFILNERPQEYVKLICDFIKVNRYKSLQEHIRHVENFSSAELEARHNAEHERQMEELRQLTQTTPTAEQVKTIDNLASKVDLSATERQQQQNKEITV.

A mitochondrion-targeting transit peptide spans 1 to 24 (MFFTKVLNNQVANGLKQLPVHKRV). Positions 48–154 (PIVFVHGIFG…DNSPIEQPHI (107 aa)) constitute an AB hydrolase-1 domain. Residues S121, D145, and H295 each act as charge relay system in the active site.

It belongs to the AB hydrolase superfamily.

It is found in the mitochondrion. The catalysed reaction is ethanol + acetyl-CoA = ethyl acetate + CoA. It catalyses the reaction acetyl-CoA + H2O = acetate + CoA + H(+). It carries out the reaction ethyl acetate + H2O = ethanol + acetate + H(+). By ethanol. Thioesterase and esterase reactions are highly repressed in the presence of high ethanol concentrations. Alcohol acetyltransferase that catalyzes the synthesis of ethyl acetate from ethanol and acetyl-CoA. Can also function as a thioesterase by hydrolyzing acetyl-CoA in the absence of ethanol, as well as esterase hydrolyzing ethyl acetate. The sequence is that of Ethanol acetyltransferase 1 (EAT1) from Wickerhamomyces anomalus (strain ATCC 58044 / CBS 1984 / NCYC 433 / NRRL Y-366-8) (Yeast).